The sequence spans 449 residues: Serum response factor homolog (449 aa).

The interval 23-166 (LADPADMYGN…PPANGKKTKG (144 aa)) is disordered. Over residues 69–80 (QCQTLHSPQHAS) the composition is skewed to polar residues. The span at 81–107 (QQQQQQQQQQQQHQQQQQQQQQHPQQQ) shows a compositional bias: low complexity. Residue Ser-156 is modified to Phosphoserine. Residues 167–225 (RVKIKMEYIDNKLRRYTTFSKRKTGIMKKAYELSTLTGTQVMLLVASETGHVYTFATRK) form the MADS-box domain. 2 disordered regions span residues 270–360 (YNIA…GGGS) and 418–449 (LTAS…QEFD). Low complexity-rich tracts occupy residues 317-331 (SAPP…TASS) and 345-354 (TNSGPSTSTA).

As to expression, after germ band retraction, high levels of zygotic expression are observed in a distinct subset of peripheral tracheal cells distributed throughout the embryo and low levels in somatic muscle. Expressed in the future intervein tissue of the wing imaginal disk from the third instar larvae until eclosion of the adult fly (at protein level).

The protein localises to the nucleus. Functionally, required for the formation of intervein tissue of the wing. Acts in a dosage-dependent manner to suppress wing vein formation and promote development of intervein cells. Might play a role in the proper formation and maintenance of the trachea. The polypeptide is Serum response factor homolog (bs) (Drosophila melanogaster (Fruit fly)).